Consider the following 82-residue polypeptide: Sec-independent protein translocase protein TatA (82 aa).

A helical membrane pass occupies residues 1 to 21; the sequence is MGSFSIWHWLIVLLIVVMVFG. Residues 46–82 are disordered; sequence GASTDDSATTSAPAGQVTNNSAAADKTTIDVEAKHKS. Polar residues predominate over residues 49-67; sequence TDDSATTSAPAGQVTNNSA. The span at 72 to 82 shows a compositional bias: basic and acidic residues; the sequence is TTIDVEAKHKS.

It belongs to the TatA/E family. The Tat system comprises two distinct complexes: a TatABC complex, containing multiple copies of TatA, TatB and TatC subunits, and a separate TatA complex, containing only TatA subunits. Substrates initially bind to the TatABC complex, which probably triggers association of the separate TatA complex to form the active translocon.

It localises to the cell inner membrane. Functionally, part of the twin-arginine translocation (Tat) system that transports large folded proteins containing a characteristic twin-arginine motif in their signal peptide across membranes. TatA could form the protein-conducting channel of the Tat system. In Acidovorax ebreus (strain TPSY) (Diaphorobacter sp. (strain TPSY)), this protein is Sec-independent protein translocase protein TatA.